The sequence spans 229 residues: MCYNMEKYTEKKQRNQVFQKFIKRHIGENQMDLVEDCNTFLSFVADKTLEKQKLYKANSCKNRFCPVCAWRKARKDALGLSLMMQYIKQQEKKEFIFLTLTTPNVMSDELENEIKRYNNSFRKLIKRKKVGSVIKGYVRKLEITYNKKRDDYNPHFHVLIAVNKSYFTDKRYYISQQEWLDLWRDVTGISEITQVQVQKIRQNNNKELYEMAKYSGKDSDYLINKSKSL.

Residue tyrosine 214 participates in DNA binding.

Belongs to the Gram-positive plasmids replication protein type 1 family.

Functionally, produces a single-strand nick in a specific site of the plasmid, and this nick results in single-strand replication by rolling circle mechanism. The polypeptide is Protein rep (Staphylococcus aureus).